The primary structure comprises 91 residues: Small ribosomal subunit protein uS19 (91 aa).

Belongs to the universal ribosomal protein uS19 family.

Functionally, protein S19 forms a complex with S13 that binds strongly to the 16S ribosomal RNA. In Alcanivorax borkumensis (strain ATCC 700651 / DSM 11573 / NCIMB 13689 / SK2), this protein is Small ribosomal subunit protein uS19.